The following is a 377-amino-acid chain: Chaperone protein DnaJ (377 aa).

A J domain is found at 5 to 70 (DFYEVLGVDR…EKRSAYDRMG (66 aa)). The segment at 136–214 (GCKKEISFTA…CHGTGVKDKS (79 aa)) adopts a CR-type zinc-finger fold. Zn(2+) contacts are provided by C149, C152, C166, C169, C188, C191, C202, and C205. CXXCXGXG motif repeat units follow at residues 149–156 (CETCDGKG), 166–173 (CSTCGGHG), 188–195 (CPNCGGSG), and 202–209 (CNDCHGTG). Residues 353–377 (LDGDSKHHQSPKKKSFFEKLGDLFD) are disordered. Residues 367 to 377 (SFFEKLGDLFD) show a composition bias toward basic and acidic residues.

This sequence belongs to the DnaJ family. As to quaternary structure, homodimer. Zn(2+) serves as cofactor.

It localises to the cytoplasm. Its function is as follows. Participates actively in the response to hyperosmotic and heat shock by preventing the aggregation of stress-denatured proteins and by disaggregating proteins, also in an autonomous, DnaK-independent fashion. Unfolded proteins bind initially to DnaJ; upon interaction with the DnaJ-bound protein, DnaK hydrolyzes its bound ATP, resulting in the formation of a stable complex. GrpE releases ADP from DnaK; ATP binding to DnaK triggers the release of the substrate protein, thus completing the reaction cycle. Several rounds of ATP-dependent interactions between DnaJ, DnaK and GrpE are required for fully efficient folding. Also involved, together with DnaK and GrpE, in the DNA replication of plasmids through activation of initiation proteins. The chain is Chaperone protein DnaJ from Psychrobacter sp. (strain PRwf-1).